Consider the following 153-residue polypeptide: Natriuretic peptides A (153 aa).

A signal peptide spans 1–25 (MGSFSTIMASFLLFLAFQLQGQTRA). Propeptides lie at residues 26–123 (NPVY…AAPR) and 93–103 (DGGALGRGSWD). Residues 54–105 (EDEVMPPQVLSDQSEEERAALSPLPEVPPWTGEVNPAQRDGGALGRGSWDSS) are disordered. Serine 129 carries the post-translational modification Phosphoserine. Cysteine 130 and cysteine 146 are joined by a disulfide. Residues 147–151 (NSFRY) are important for degradation of atrial natriuretic peptide by IDE.

Belongs to the natriuretic peptide family. In terms of assembly, homodimer; disulfide-linked antiparallel dimer. In terms of processing, the precursor molecule is proteolytically cleaved by CORIN at Arg-123 to produce the atrial natriuretic peptide. Undergoes further proteolytic cleavage by unknown proteases to give rise to long-acting natriuretic peptide, vessel dilator and kaliuretic peptide. Additional processing gives rise to the auriculin and atriopeptin peptides. In the kidneys, alternative processing by an unknown protease results in the peptide urodilatin. Cleavage by MME initiates degradation of the factor and thereby regulates its activity. Degradation by IDE results in reduced activation of NPR1 (in vitro). During IDE degradation, the resulting products can temporarily stimulate NPR2 to produce cGMP, before the fragments are completely degraded and inactivated by IDE (in vitro). Post-translationally, degraded by IDE. In terms of processing, phosphorylation on Ser-129 decreases vasorelaxant activity.

It localises to the secreted. It is found in the perikaryon. The protein localises to the cell projection. In terms of biological role, hormone that plays a key role in mediating cardio-renal homeostasis, and is involved in vascular remodeling and regulating energy metabolism. Acts by specifically binding and stimulating NPR1 to produce cGMP, which in turn activates effector proteins, such as PRKG1, that drive various biological responses. Regulates vasodilation, natriuresis, diuresis and aldosterone synthesis and is therefore essential for regulating blood pressure, controlling the extracellular fluid volume and maintaining the fluid-electrolyte balance. Also involved in inhibiting cardiac remodeling and cardiac hypertrophy by inducing cardiomyocyte apoptosis and attenuating the growth of cardiomyocytes and fibroblasts. Plays a role in female pregnancy by promoting trophoblast invasion and spiral artery remodeling in uterus, and thus prevents pregnancy-induced hypertension. In adipose tissue, acts in various cGMP- and PKG-dependent pathways to regulate lipid metabolism and energy homeostasis. This includes up-regulating lipid metabolism and mitochondrial oxygen utilization by activating the AMP-activated protein kinase (AMPK), and increasing energy expenditure by acting via MAPK11 to promote the UCP1-dependent thermogenesis of brown adipose tissue. Binds the clearance receptor NPR3 which removes the hormone from circulation. May have a role in cardio-renal homeostasis through regulation of natriuresis, diuresis, vasodilation, and inhibiting aldosterone synthesis. In vitro, promotes the production of cGMP and induces vasodilation. May promote natriuresis, at least in part, by enhancing prostaglandin E2 synthesis resulting in the inhibition of renal Na+-K+-ATPase. However reports on the involvement of this peptide in mammal blood volume and blood pressure homeostasis are conflicting; according to a report, in vivo it is not sufficient to activate cGMP and does not inhibit collecting duct transport nor effect diuresis and natriuresis. Appears to bind to specific receptors that are distinct from the receptors bound by atrial natriuretic peptide and vessel dilator. Possibly enhances protein excretion in urine by decreasing proximal tubular protein reabsorption. Its function is as follows. May have a role in cardio-renal homeostasis through regulation of natriuresis, diuresis, and vasodilation. In vitro, promotes the production of cGMP and induces vasodilation. May promote natriuresis, at least in part, by enhancing prostaglandin E2 synthesis resulting in the inhibition of renal Na+-K+-ATPase. However reports on the involvement of this peptide in mammal blood volume and blood pressure homeostasis are conflicting; according to a report it is not sufficient to activate cGMP and does not inhibit collecting duct transport nor effect diuresis and natriuresis. Appears to bind to specific receptors that are distinct from the receptors bound by the atrial natriuretic and long-acting natriuretic peptides. Possibly functions in protein excretion in urine by maintaining the integrity of the proximal tubules and enhancing protein excretion by decreasing proximal tubular protein reabsorption. Functionally, may have a role in cardio-renal homeostasis through regulation of diuresis and inhibiting aldosterone synthesis. In vitro, promotes the production of cGMP and induces vasodilation. May promote natriuresis, at least in part, by enhancing prostaglandin E2 synthesis resulting in the inhibition of renal Na+-K+-ATPase. May have a role in potassium excretion but not sodium excretion (natriuresis). Possibly enhances protein excretion in urine by decreasing proximal tubular protein reabsorption. In terms of biological role, hormone produced in the kidneys that appears to be important for maintaining cardio-renal homeostasis. Mediates vasodilation, natriuresis and diuresis primarily in the renal system, in order to maintain the extracellular fluid volume and control the fluid-electrolyte balance. Specifically binds and stimulates cGMP production by renal transmembrane receptors, likely NPR1. Urodilatin not ANP, may be the natriuretic peptide responsible for the regulation of sodium and water homeostasis in the kidney. May have a role in cardio-renal homeostasis through regulation of natriuresis and vasodilation. In vivo promotes natriuresis and in vitro, vasodilates renal artery strips. Its function is as follows. May have a role in cardio-renal homeostasis through regulation of regulation of natriuresis and vasodilation. In vivo promotes natriuresis. In vitro, vasodilates intestinal smooth muscle but not smooth muscle strips. Functionally, may have a role in cardio-renal homeostasis through regulation of natriuresis and vasodilation. In vivo promotes natriuresis. In vitro, selectively vasodilates intestinal and vascular smooth muscle strips. In terms of biological role, may have a role in cardio-renal homeostasis through regulation of natriuresis and vasodilation. In vivo promotes natriuresis. In vitro, selectively vasodilates intestinal smooth muscle but not vascular smooth muscle strips. This is Natriuretic peptides A (NPPA) from Equus caballus (Horse).